Consider the following 256-residue polypeptide: Doublecortin domain-containing protein (256 aa).

Residues 71 to 103 (NVFERLTDTAYYTGSHRERFDEFGNGRGIAGRE) are partial p25alpha domain. The Doublecortin domain occupies 152-226 (RLMWLYRNGD…AKYLCTSGEP (75 aa)).

The protein localises to the cytoplasm. The protein resides in the cytoskeleton. In terms of biological role, specifically required in the formation and maintenance of the conoid fibers; the conoid is a component of the cytoskeletal apical complex, which is composed of a left-handed spiral of 14 fibers made from a nontubular tubulin polymer. Promotes the organization, curvature, and stability of the conoid fibers, and probably bridges other conoid components to the tubulin core. The sequence is that of Doublecortin domain-containing protein from Toxoplasma gondii (strain ATCC 50861 / VEG).